The following is a 534-amino-acid chain: Arginine--tRNA ligase (534 aa).

A 'HIGH' region motif is present at residues 120 to 130 (ANPTGFLHLGH).

Belongs to the class-I aminoacyl-tRNA synthetase family. As to quaternary structure, monomer.

It is found in the cytoplasm. It catalyses the reaction tRNA(Arg) + L-arginine + ATP = L-arginyl-tRNA(Arg) + AMP + diphosphate. The sequence is that of Arginine--tRNA ligase from Mesomycoplasma hyopneumoniae (strain J / ATCC 25934 / NCTC 10110) (Mycoplasma hyopneumoniae).